A 161-amino-acid polypeptide reads, in one-letter code: Large ribosomal subunit protein bL17 (161 aa).

A disordered region spans residues 126–161 (KVAKKATRTRRSKKTTEAAPAAEVPATEEPKAESAE). Positions 129–138 (KKATRTRRSK) are enriched in basic residues. Low complexity predominate over residues 142–152 (EAAPAAEVPAT).

It belongs to the bacterial ribosomal protein bL17 family. As to quaternary structure, part of the 50S ribosomal subunit. Contacts protein L32.

The protein is Large ribosomal subunit protein bL17 of Bacteroides fragilis (strain ATCC 25285 / DSM 2151 / CCUG 4856 / JCM 11019 / LMG 10263 / NCTC 9343 / Onslow / VPI 2553 / EN-2).